The primary structure comprises 322 residues: Cytochrome c biogenesis protein CcsA (322 aa).

8 consecutive transmembrane segments (helical) span residues 15–35 (FSIV…VDGI), 45–65 (GMIV…TYSG), 72–92 (LYES…VPYF), 98–120 (YLST…GLLT), 144–164 (MILG…LLVI), 226–246 (GISL…VWAN), 253–273 (WNWD…AIYL), and 287–307 (AIVA…VNLL).

Belongs to the CcmF/CycK/Ccl1/NrfE/CcsA family. May interact with Ccs1.

The protein resides in the plastid. Its subcellular location is the chloroplast thylakoid membrane. In terms of biological role, required during biogenesis of c-type cytochromes (cytochrome c6 and cytochrome f) at the step of heme attachment. This chain is Cytochrome c biogenesis protein CcsA, found in Coffea arabica (Arabian coffee).